The chain runs to 232 residues: 6-phosphogluconolactonase (232 aa).

It belongs to the glucosamine/galactosamine-6-phosphate isomerase family. 6-phosphogluconolactonase subfamily.

The catalysed reaction is 6-phospho-D-glucono-1,5-lactone + H2O = 6-phospho-D-gluconate + H(+). Its pathway is carbohydrate degradation; pentose phosphate pathway; D-ribulose 5-phosphate from D-glucose 6-phosphate (oxidative stage): step 2/3. Hydrolysis of 6-phosphogluconolactone to 6-phosphogluconate. This chain is 6-phosphogluconolactonase (pgl), found in Caulobacter vibrioides (strain ATCC 19089 / CIP 103742 / CB 15) (Caulobacter crescentus).